We begin with the raw amino-acid sequence, 277 residues long: Glycerol-3-phosphate acyltransferase (277 aa).

Transmembrane regions (helical) follow at residues 3–23, 55–75, 79–99, 111–131, and 155–175; these read LFIF…AIIV, IMVM…AKLL, PVTV…PVFF, IGAL…TWLL, and LILV…ILVL. The interval 207–277 is disordered; that stretch reads SPATSAEQEF…PKTKTVKEKE (71 aa). The segment covering 216–239 has biased composition (basic and acidic residues); it reads FPGKEVIDTNIDETEKTEQAEAVK. 2 stretches are compositionally biased toward basic residues: residues 240 to 253 and 262 to 271; these read KPKV…AKKT and KPKSTKPKTK.

This sequence belongs to the PlsY family. As to quaternary structure, probably interacts with PlsX.

Its subcellular location is the cell inner membrane. The enzyme catalyses an acyl phosphate + sn-glycerol 3-phosphate = a 1-acyl-sn-glycero-3-phosphate + phosphate. It functions in the pathway lipid metabolism; phospholipid metabolism. Its function is as follows. Catalyzes the transfer of an acyl group from acyl-phosphate (acyl-PO(4)) to glycerol-3-phosphate (G3P) to form lysophosphatidic acid (LPA). This enzyme utilizes acyl-phosphate as fatty acyl donor, but not acyl-CoA or acyl-ACP. The polypeptide is Glycerol-3-phosphate acyltransferase (Legionella pneumophila (strain Corby)).